The chain runs to 343 residues: MTEIYDFDKSAWDIKGSIAPTQPTTHSEGRLVPQVRVIDPGPGDRKDECLMYMSLLGVVEDSDPLGPPIGRAFGSPPLGVGRSTAKPEELLKEATELDIVVRRTAGLNEKLVFYNNTPLTLPTPWRKVPTTGSVFNANQVCNAVNLTPLDTPQRFRVVYTSITRLSDNGHYTVPRRMLEFRSVNAVAFNLLATLRIDKAIGHGKIIDNAEQLPEATFMVHIGNFRRKKSEVYSADHCKMEIEKMGLVFALGGIGGTSPHIRSTGKMSKTLHAQLGFKKTLCYPLMDINEDLNRLLWRSRCKIARIQAVLQPSVPQEFRIYDDVIINDDQGLFKALQTVVPSNA.

This sequence belongs to the morbillivirus/respirovirus/rubulavirus M protein family. Homodimer. Dimerization is critical for virion formation. Interacts with host ANP32B.

It is found in the virion. Its subcellular location is the host cell membrane. In terms of biological role, the M protein has a crucial role in virus assembly and interacts with the RNP complex as well as with the viral membrane. Associates with phosphatidylserine (PS) and phosphatidylinositol 4,5-bisphosphate (PIP2) at the plasma membrane. Interaction with PIP2 triggers matrix protein lattice polymerization. Matrix proteins induce host membrane deformation and curvature necessary for virion assembly/budding. This Measles virus (strain Biken) (MeV) protein is Matrix protein (M).